Here is a 408-residue protein sequence, read N- to C-terminus: (R)-2-hydroxyisocaproyl-CoA dehydratase alpha subunit (408 aa).

Position 55 (Glu55) interacts with substrate. Cys84, Cys117, and Cys346 together coordinate [4Fe-4S] cluster.

The protein belongs to the FldB/FldC dehydratase alpha/beta subunit family. Part of the heterodimeric complex HadBC composed of (R)-2-hydroxyisocaproyl-CoA dehydratase alpha (HadB) and beta (HadC) subunit. [4Fe-4S] cluster serves as cofactor.

It catalyses the reaction (R)-2-hydroxy-4-methylpentanoyl-CoA = 4-methylpent-2-enoyl-CoA + H2O. With respect to regulation, activated by HadI. Its function is as follows. Involved in the reductive branch of L-leucine fermentation. Catalyzes the irreversible beta/alpha-elimination of water from (R)-2-hydroxyisocaproyl-CoA to yield isocaprenoyl-CoA. This beta/alpha-dehydration depends on the reductive formation of ketyl radicals on the substrate generated by injection of a single electron from the ATP-dependent activator protein HadI. The enzyme is specific for the R-isomer. This Clostridioides difficile (Peptoclostridium difficile) protein is (R)-2-hydroxyisocaproyl-CoA dehydratase alpha subunit.